Reading from the N-terminus, the 1000-residue chain is MMDLSSKDALSDVLKDTHAQSSDPSLWAIFGHQSSDNVHEGGNESVSVEQEIFDLSQLSERPVSETVSKASIPTNINGLSQVKPSALEKSQEVLSLQKLPIKGRRPAGRRGRPALNTSNSLERNGTRYVSAEAPISVKSSIPAIPRVTFERLCYESAIASNLPPNALSPLEAEMLSEILENPTWLSLYLSIRNGICYLWHRNPTLYVSFNEALGIVREKKAFPLASLAFEFLSRNGHINYGCIYIISSLKLDESLSQKTVAIIGAGMAGISCARQLTNLFAQYEQDFLSRGEKPPRIVIYEASERLGGHIYTHMVPLSDNEVSEKSSLATTVNATNECMVNLLTDSLIGMPTLDSDPLYIISSQQLSLDAVHTRNREFILHDIENGRIDTEHVQRIFRLFDALLFYFNASASKQPLHSLITPPEQEFIQKLDQIGWYISIEAFPLQIKDTLSEFLGNSANTLTSLLHLTVLDLKIFEWFKEYLSQSLSVSLENVYPGSIPNLNLLLGENVASYSFKHGMADMLNSLASTPSPLPILFDQCVHTVKLEDNTVNLSFVNETTVSVDKVVICIPMDKLNTHLITFEPPLEEKKLKAIDRCHFTNVKKVILIFKTQFWEPNISIFGSLPQDSGRNFIFNDCTRFYEHPTLSVFVKVEGIDFMKDDDIVNGIVSQLKKVYKPKSEAINPIRTIISNWENNSYTNHSSYQISNLFLEEDYAILSEPIDNTVFFASEAISQKNSGSIRGAFDSGILAARDVLASLIGNVVLPNTLVIEENLEQPRKTYGTKRNAQQALGKEGERENKEKRISYHTEYLRLRQKRLDKEQQECDLLIAELLGPSPVPPSRPSANPYLLYQKTQWHVCKTLADQDKQRVTGDPEARATKNEIRAKLGKTWRALDSLGKQPWVDEINARRANYSTRLEEYQRQINSYNVRVAQIKSEHQRRCESQPIPEDEAKLKLLAEQEDEHLHPEKEGMSVENSDDDYHDDLDYEDSISEVFPDNFS.

The tract at residues 104–123 (RRPAGRRGRPALNTSNSLER) is disordered. Residues 107–137 (AGRRGRPALNTSNSLERNGTRYVSAEAPISV) adopt a coiled-coil conformation. One can recognise an SWIRM domain in the interval 153 to 249 (CYESAIASNL…YGCIYIISSL (97 aa)). Residues 260–302 (VAII…IYEA), glutamate 301, and 328–329 (LA) each bind FAD. The segment at 279 to 950 (LFAQYEQDFL…RCESQPIPED (672 aa)) is demethylase activity. Positions 434–529 (IGWYISIEAF…ADMLNSLAST (96 aa)) form a coiled coil. The tract at residues 780–800 (TYGTKRNAQQALGKEGERENK) is disordered. Residues 841 to 921 (SRPSANPYLL…NYSTRLEEYQ (81 aa)) constitute a DNA-binding region (HMG box). 908-909 (AR) contributes to the FAD binding site. The segment covering 959–972 (EQEDEHLHPEKEGM) has biased composition (basic and acidic residues). The segment at 959–1000 (EQEDEHLHPEKEGMSVENSDDDYHDDLDYEDSISEVFPDNFS) is disordered. Acidic residues predominate over residues 976-991 (NSDDDYHDDLDYEDSI).

This sequence belongs to the flavin monoamine oxidase family. As to quaternary structure, component of the SWM histone demethylase complex composed of at least lsd1, lsd2, phf1 and phf2. Interacts directly with lsd2. The cofactor is FAD.

The protein localises to the nucleus. In terms of biological role, catalytic component of the SWM histone demethylase complex that specifically demethylates H3K9me2, a specific tag for epigenetic transcriptional activation, thereby acting as a corepressor. Acts by oxidizing the substrate by FAD to generate the corresponding imine that is subsequently hydrolyzed. Has a role in regulating heterochromatin propagation and euchromatic transcription. Also has a gene activating role. This chain is Lysine-specific histone demethylase 1 (lsd1), found in Schizosaccharomyces pombe (strain 972 / ATCC 24843) (Fission yeast).